An 891-amino-acid chain; its full sequence is Fanconi-associated nuclease 1 homolog (891 aa).

The Mn(2+) site is built by glutamate 712, aspartate 833, glutamate 852, and valine 853. The region spanning 770–884 (GMAEEILIIS…GFNVEICKVR (115 aa)) is the VRR-NUC domain.

It belongs to the FAN1 family. Mn(2+) serves as cofactor. The cofactor is Mg(2+).

Its subcellular location is the nucleus. It catalyses the reaction Hydrolytically removes 5'-nucleotides successively from the 3'-hydroxy termini of 3'-hydroxy-terminated oligonucleotides.. Functionally, nuclease required for the repair of DNA interstrand cross-links (ICLs). Acts as a 5'-3' exonuclease that anchors at a cut end of DNA and cleaves DNA successively at every third nucleotide, allowing to excise an ICL from one strand through flanking incisions. May act upstream of the helicase RECQL4A and the ATPase RAD5A, which is involved in error-free post-replicative repair. Functions independently of MUS81 pathway, but in a similar pathway with RECQ4A, RAD5A and MFH1 in ICL repair. The polypeptide is Fanconi-associated nuclease 1 homolog (Arabidopsis thaliana (Mouse-ear cress)).